The sequence spans 416 residues: Gamma-glutamyl phosphate reductase (416 aa).

It belongs to the gamma-glutamyl phosphate reductase family.

The protein localises to the cytoplasm. It catalyses the reaction L-glutamate 5-semialdehyde + phosphate + NADP(+) = L-glutamyl 5-phosphate + NADPH + H(+). Its pathway is amino-acid biosynthesis; L-proline biosynthesis; L-glutamate 5-semialdehyde from L-glutamate: step 2/2. Functionally, catalyzes the NADPH-dependent reduction of L-glutamate 5-phosphate into L-glutamate 5-semialdehyde and phosphate. The product spontaneously undergoes cyclization to form 1-pyrroline-5-carboxylate. This Vibrio parahaemolyticus serotype O3:K6 (strain RIMD 2210633) protein is Gamma-glutamyl phosphate reductase.